The sequence spans 582 residues: Zinc finger protein 319 (582 aa).

Low complexity predominate over residues 1–14 (MSESWQQPPQTQPQ). Residues 1-39 (MSESWQQPPQTQPQQPQPPQPQHHAEPPPALAEHTLPPG) form a disordered region. Residues 76–100 (PKCGVCGHDLAHLSSPHEHQCLAGH) form a C2H2-type 1 zinc finger. The C2H2-type 2; degenerate zinc-finger motif lies at 104 to 126 (FQCTQCLKIFHQATDLLEHQCVQ). Lys-130 participates in a covalent cross-link: Glycyl lysine isopeptide (Lys-Gly) (interchain with G-Cter in SUMO2). The C2H2-type 3 zinc-finger motif lies at 132–154 (FVCGVCKMGFSLLTSLAQHHSSH). Positions 174–196 (EPATTAAPSLPAAPAPSTVTPAE) are enriched in low complexity. Positions 174–198 (EPATTAAPSLPAAPAPSTVTPAEQA) are disordered. 3 C2H2-type zinc fingers span residues 202–224 (YSCP…ERIH), 230–252 (YKCT…KRTH), and 258–280 (YKCA…MYAH). Phosphoserine is present on Ser-281. The segment at 287–309 (FRCNVCELHFKESSELLQHPCTP) adopts a C2H2-type 7; degenerate zinc-finger fold. C2H2-type zinc fingers lie at residues 315–337 (FRCG…ERTH), 343–365 (FKCD…RRTH), and 371–393 (FKCG…QHVH). The segment at 399–421 (FKCPVCQKGFDQSAELLRHKCLP) adopts a C2H2-type 11; degenerate zinc-finger fold. The segment at 428–450 (FKCPVCNKAYKRASALQKHQLAH) adopts a C2H2-type 12 zinc-finger fold. A C2H2-type 13; degenerate zinc finger spans residues 458–480 (LRCTLCERRFFSSSEFVQHRCDP). 3 consecutive C2H2-type zinc fingers follow at residues 486-508 (LKCP…RRVH), 514-536 (YKCP…QGVH), and 542-564 (FKCV…SAQH).

It belongs to the krueppel C2H2-type zinc-finger protein family.

It is found in the nucleus. In terms of biological role, may be involved in transcriptional regulation. In Homo sapiens (Human), this protein is Zinc finger protein 319 (ZNF319).